The following is a 421-amino-acid chain: Hydrolyase poxO (421 aa).

Ser-239 (nucleophile) is an active-site residue.

The protein belongs to the AB hydrolase superfamily. FUS2 hydrolase family. Homodimer.

Its pathway is secondary metabolite biosynthesis. Functionally, hydrolyase; part of the gene cluster that mediates the biosynthesis of oxaleimides, cytotoxic compounds containing an unusual disubstituted succinimide moiety. The first step of the pathway is provided by the HR-PKS poxF that serves in a new mode of collaborative biosynthesis with the PKS-NRPS poxE, by providing the olefin containing amino acid substrate via the synthesis of an ACP-bound dec-4-enoate. The cytochrome P450 monooxygenase poxM-catalyzed oxidation at the alpha-position creates the enzyme-bound 2-hydroxydec-4-enoyl-ACP thioester, which may be prone to spontaneous hydrolysis to yield 2-hydroxydec-4-enoic acid due to increased electrophilicity of the carbonyl. 2-hydroxydec-4-enoic acid can then be further oxidized by poxM to yield the alpha-ketoacid 2-oxodec-4-enoicacid, which is reductively aminated by the aminotransferase poxL to yield (S,E)-2-aminodec-4-enoic acid. The Hybrid PKS-NRPS synthetase poxE then performs condensation between the octaketide product of its PKS modules and the amino group of (S,E)-2-aminodec-4-enoic acid which is activated and incorporated by the adenylation domain. The resulting aminoacyl product can be cyclized by the Diels-Alderase PoxQ and reductively released by the reductive (R) domain of poxE to yield an aldehyde intermediate. The released aldehyde is then substrate for a Knoevenagel condensation by the hydrolyase poxO followed by an oxidation at the 5-position of the pyrrolidone ring. The presence of the olefin from the amino acid building block allows for migration of the substituted allyl group to occur. This allylic transposition reaction takes place in a conjugate addition, semipinacol-like fashion to yield a succinimide intermediate. Iterative two-electron oxidations of the C7 methyl of the succinimide intermediate to the carboxylic acid can be catalyzed by one of two remaining cytochrome P450 monooxygenasess poxC or poxD to yield oxaleimide A. Subsequent oxidation yields the maleimide scaffold oxaleimide I. Both oxaleimide A and oxaleimide I can undergo oxidative modifications in the decalin ring to yield the series of products oxaleimides B to H. The protein is Hydrolyase poxO of Penicillium oxalicum (strain 114-2 / CGMCC 5302) (Penicillium decumbens).